The primary structure comprises 432 residues: Adenylosuccinate synthetase (432 aa).

GTP is bound by residues 12–18 (GDEGKGK) and 40–42 (GHT). Aspartate 13 serves as the catalytic Proton acceptor. Residues aspartate 13 and glycine 40 each coordinate Mg(2+). IMP-binding positions include 13-16 (DEGK), 38-41 (NAGH), threonine 132, arginine 146, glutamine 226, threonine 241, and arginine 305. Histidine 41 functions as the Proton donor in the catalytic mechanism. 301–307 (VVTGRKR) contacts substrate. GTP-binding positions include arginine 307, 333–335 (KLD), and 415–417 (STS).

It belongs to the adenylosuccinate synthetase family. Homodimer. Mg(2+) serves as cofactor.

It localises to the cytoplasm. It catalyses the reaction IMP + L-aspartate + GTP = N(6)-(1,2-dicarboxyethyl)-AMP + GDP + phosphate + 2 H(+). The protein operates within purine metabolism; AMP biosynthesis via de novo pathway; AMP from IMP: step 1/2. Its function is as follows. Plays an important role in the de novo pathway of purine nucleotide biosynthesis. Catalyzes the first committed step in the biosynthesis of AMP from IMP. The sequence is that of Adenylosuccinate synthetase from Rhizobium etli (strain CIAT 652).